The primary structure comprises 352 residues: Chorismate synthase (352 aa).

An NADP(+)-binding site is contributed by Arg-48. FMN is bound by residues 125 to 127, 237 to 238, Gly-278, 293 to 297, and Arg-319; these read RSS, NA, and KPTSS.

This sequence belongs to the chorismate synthase family. In terms of assembly, homotetramer. FMNH2 serves as cofactor.

The enzyme catalyses 5-O-(1-carboxyvinyl)-3-phosphoshikimate = chorismate + phosphate. The protein operates within metabolic intermediate biosynthesis; chorismate biosynthesis; chorismate from D-erythrose 4-phosphate and phosphoenolpyruvate: step 7/7. Catalyzes the anti-1,4-elimination of the C-3 phosphate and the C-6 proR hydrogen from 5-enolpyruvylshikimate-3-phosphate (EPSP) to yield chorismate, which is the branch point compound that serves as the starting substrate for the three terminal pathways of aromatic amino acid biosynthesis. This reaction introduces a second double bond into the aromatic ring system. This Francisella tularensis subsp. tularensis (strain FSC 198) protein is Chorismate synthase.